Here is a 228-residue protein sequence, read N- to C-terminus: Urease accessory protein UreF (228 aa).

Belongs to the UreF family. In terms of assembly, ureD, UreF and UreG form a complex that acts as a GTP-hydrolysis-dependent molecular chaperone, activating the urease apoprotein by helping to assemble the nickel containing metallocenter of UreC. The UreE protein probably delivers the nickel.

Its subcellular location is the cytoplasm. Functionally, required for maturation of urease via the functional incorporation of the urease nickel metallocenter. In Prochlorococcus marinus (strain MIT 9215), this protein is Urease accessory protein UreF.